A 167-amino-acid polypeptide reads, in one-letter code: Transcription factor E (167 aa).

Residues 5–87 (ENPIHRAYLL…LWKICPESLD (83 aa)) form the HTH TFE/IIEalpha-type domain.

The protein belongs to the TFE family. Monomer. Interaction with RNA polymerase subunits RpoF and RpoE is necessary for Tfe stimulatory transcription activity. Able to interact with Tbp and RNA polymerase in the absence of DNA promoter. Interacts both with the preinitiation and elongation complexes.

Functionally, transcription factor that plays a role in the activation of archaeal genes transcribed by RNA polymerase. Facilitates transcription initiation by enhancing TATA-box recognition by TATA-box-binding protein (Tbp), and transcription factor B (Tfb) and RNA polymerase recruitment. Not absolutely required for transcription in vitro, but particularly important in cases where Tbp or Tfb function is not optimal. It dynamically alters the nucleic acid-binding properties of RNA polymerases by stabilizing the initiation complex and destabilizing elongation complexes. Seems to translocate with the RNA polymerase following initiation and acts by binding to the non template strand of the transcription bubble in elongation complexes. This Methanothrix thermoacetophila (strain DSM 6194 / JCM 14653 / NBRC 101360 / PT) (Methanosaeta thermophila) protein is Transcription factor E.